Consider the following 206-residue polypeptide: FMN-dependent NADH:quinone oxidoreductase (206 aa).

FMN-binding positions include 15–17 (SVS), 94–97 (MYNF), and 138–141 (TRGG).

It belongs to the azoreductase type 1 family. Homodimer. The cofactor is FMN.

The enzyme catalyses 2 a quinone + NADH + H(+) = 2 a 1,4-benzosemiquinone + NAD(+). It catalyses the reaction N,N-dimethyl-1,4-phenylenediamine + anthranilate + 2 NAD(+) = 2-(4-dimethylaminophenyl)diazenylbenzoate + 2 NADH + 2 H(+). Functionally, quinone reductase that provides resistance to thiol-specific stress caused by electrophilic quinones. In terms of biological role, also exhibits azoreductase activity. Catalyzes the reductive cleavage of the azo bond in aromatic azo compounds to the corresponding amines. This is FMN-dependent NADH:quinone oxidoreductase from Rhizobium meliloti (strain 1021) (Ensifer meliloti).